A 449-amino-acid polypeptide reads, in one-letter code: Glucose-6-phosphate isomerase (449 aa).

Catalysis depends on Glu291, which acts as the Proton donor. Active-site residues include His312 and Lys426.

Belongs to the GPI family.

The protein localises to the cytoplasm. It catalyses the reaction alpha-D-glucose 6-phosphate = beta-D-fructose 6-phosphate. Its pathway is carbohydrate biosynthesis; gluconeogenesis. It functions in the pathway carbohydrate degradation; glycolysis; D-glyceraldehyde 3-phosphate and glycerone phosphate from D-glucose: step 2/4. Catalyzes the reversible isomerization of glucose-6-phosphate to fructose-6-phosphate. The chain is Glucose-6-phosphate isomerase from Streptococcus thermophilus (strain CNRZ 1066).